The primary structure comprises 164 residues: MTGIYYLYLRQDDPKKATMRKLERFGLAKRVDIKGVGLKLVLTPYADIFLSREDAVLYEKYGLCVIEGSWNKIDSIKSLKFRIERRLPALLAANPVNYGKIGILSSVEATAAALYIIGYWDTAYALLSKFSWGLNFIKLNENPLNEYSTADRSEIKKIEESYFG.

S-adenosyl-L-methionine contacts are provided by Thr18, Ile66, Leu87, and Ser106.

Belongs to the TDD superfamily. TSR3 family.

It is found in the cytoplasm. It carries out the reaction an N(1)-methylpseudouridine in rRNA + S-adenosyl-L-methionine = N(1)-methyl-N(3)-[(3S)-3-amino-3-carboxypropyl]pseudouridine in rRNA + S-methyl-5'-thioadenosine + H(+). Aminocarboxypropyltransferase that catalyzes the aminocarboxypropyl transfer on pseudouridine corresponding to position 914 in M.jannaschii 16S rRNA. It constitutes the last step in biosynthesis of the hypermodified N1-methyl-N3-(3-amino-3-carboxypropyl) pseudouridine (m1acp3-Psi). This is 16S rRNA aminocarboxypropyltransferase from Thermoplasma volcanium (strain ATCC 51530 / DSM 4299 / JCM 9571 / NBRC 15438 / GSS1).